The chain runs to 209 residues: Urease accessory protein UreG (209 aa).

11-18 (GPVGSGKT) provides a ligand contact to GTP.

This sequence belongs to the SIMIBI class G3E GTPase family. UreG subfamily. Homodimer. UreD, UreF and UreG form a complex that acts as a GTP-hydrolysis-dependent molecular chaperone, activating the urease apoprotein by helping to assemble the nickel containing metallocenter of UreC. The UreE protein probably delivers the nickel.

Its subcellular location is the cytoplasm. Functionally, facilitates the functional incorporation of the urease nickel metallocenter. This process requires GTP hydrolysis, probably effectuated by UreG. The sequence is that of Urease accessory protein UreG from Edwardsiella ictaluri (strain 93-146).